The primary structure comprises 83 residues: MAHKKGASSSRNGRDSNAQYLGVKKFGGEAVVAGNIIVRQRGTKFHPGENVGMGKDHTLFALKDGSVKFGVRRDRKVVDVIAA.

Belongs to the bacterial ribosomal protein bL27 family.

The protein is Large ribosomal subunit protein bL27 of Bifidobacterium adolescentis (strain ATCC 15703 / DSM 20083 / NCTC 11814 / E194a).